Reading from the N-terminus, the 92-residue chain is Small ribosomal subunit protein uS19 (92 aa).

The protein belongs to the universal ribosomal protein uS19 family.

In terms of biological role, protein S19 forms a complex with S13 that binds strongly to the 16S ribosomal RNA. This Desulfosudis oleivorans (strain DSM 6200 / JCM 39069 / Hxd3) (Desulfococcus oleovorans) protein is Small ribosomal subunit protein uS19.